Reading from the N-terminus, the 305-residue chain is Imidazoleglycerol-phosphate dehydratase (305 aa).

This sequence belongs to the imidazoleglycerol-phosphate dehydratase family.

The protein localises to the cytoplasm. The enzyme catalyses D-erythro-1-(imidazol-4-yl)glycerol 3-phosphate = 3-(imidazol-4-yl)-2-oxopropyl phosphate + H2O. The protein operates within amino-acid biosynthesis; L-histidine biosynthesis; L-histidine from 5-phospho-alpha-D-ribose 1-diphosphate: step 6/9. This is Imidazoleglycerol-phosphate dehydratase from Neisseria meningitidis serogroup C (strain 053442).